Consider the following 82-residue polypeptide: Omega-conotoxin-like Am6.2 (82 aa).

Residues 1–22 (MKLTCMMIVAVLFLTAWTFVTA) form the signal peptide. Positions 23–52 (VPHSSNVLENLYLKARHEMENQEASKLNMR) are excised as a propeptide. Intrachain disulfides connect cysteine 56/cysteine 73, cysteine 63/cysteine 77, and cysteine 72/cysteine 81. Position 76 is a 6'-bromotryptophan; partial; in Am6.2b (major form) (tryptophan 76).

The protein belongs to the conotoxin O1 family. In terms of processing, mostly non-hydroxylated. Post-translationally, two forms of this peptides have been described. Am6.2a (Am3136) is not unmodified, while Am6.2b (Am3214) is Trp-76 brominated. Both forms are found in venom with a much more abundant brominated form. As to expression, expressed by the venom duct.

Its subcellular location is the secreted. In terms of biological role, omega-conotoxins act at presynaptic membranes, they bind and block voltage-gated calcium channels (Cav). The protein is Omega-conotoxin-like Am6.2 of Conus amadis (Amadis cone).